The primary structure comprises 379 residues: 3-isopropylmalate dehydrogenase 1 (379 aa).

Residues arginine 101, arginine 111, arginine 139, and aspartate 230 each coordinate substrate. Residues aspartate 230, aspartate 254, and aspartate 258 each coordinate Mg(2+). 293 to 305 (GSAPDIAGKGIAN) contacts NAD(+).

It belongs to the isocitrate and isopropylmalate dehydrogenases family. LeuB type 1 subfamily. Homodimer. Mg(2+) serves as cofactor. Requires Mn(2+) as cofactor.

It localises to the cytoplasm. It carries out the reaction (2R,3S)-3-isopropylmalate + NAD(+) = 4-methyl-2-oxopentanoate + CO2 + NADH. It functions in the pathway amino-acid biosynthesis; L-leucine biosynthesis; L-leucine from 3-methyl-2-oxobutanoate: step 3/4. Catalyzes the oxidation of 3-carboxy-2-hydroxy-4-methylpentanoate (3-isopropylmalate) to 3-carboxy-4-methyl-2-oxopentanoate. The product decarboxylates to 4-methyl-2 oxopentanoate. The protein is 3-isopropylmalate dehydrogenase 1 of Bradyrhizobium diazoefficiens (strain JCM 10833 / BCRC 13528 / IAM 13628 / NBRC 14792 / USDA 110).